A 417-amino-acid polypeptide reads, in one-letter code: MQKLVIHGGAKLQGEISISGAKNAALPVLCASLLTADTFTIQNLPHLRDITTMLALLEQIGVRILTNDPGTAELSAASITNPTASYDMVKTMRAAILVLGPLLARTGQAYISLPGGCAIGMRPVDQHIKGLQAMGADISIEQGYIRAQAGRLSGTRIVMDLVTVTGTENLMMAATLASGTTILENAAREPEVVDLADCLIGMGAKIEGAGSDIIVIEGVDHLHGSSHTVMPDRIETGTFLTAVAACGGDITLTRTRADTLDVVLGKLIETGAAIDTGEDWIRLRMQHRPQPVSLRTAPYPAFPTDMQAQFMALNSIADGTSVMTETIFENRFMHVQELKRLNADIQVEGNTAIVHGIPQLDGASVMATDLRASACLIIAGLVAQGETIVDRIYHLDRGYERIERKLAQAGAQIKRIN.

K22–N23 is a phosphoenolpyruvate binding site. R93 lines the UDP-N-acetyl-alpha-D-glucosamine pocket. Catalysis depends on C117, which acts as the Proton donor. Residue C117 is modified to 2-(S-cysteinyl)pyruvic acid O-phosphothioketal. UDP-N-acetyl-alpha-D-glucosamine contacts are provided by residues R122–Q126, D305, and I327.

It belongs to the EPSP synthase family. MurA subfamily.

Its subcellular location is the cytoplasm. It catalyses the reaction phosphoenolpyruvate + UDP-N-acetyl-alpha-D-glucosamine = UDP-N-acetyl-3-O-(1-carboxyvinyl)-alpha-D-glucosamine + phosphate. It functions in the pathway cell wall biogenesis; peptidoglycan biosynthesis. Cell wall formation. Adds enolpyruvyl to UDP-N-acetylglucosamine. This chain is UDP-N-acetylglucosamine 1-carboxyvinyltransferase, found in Nitrosomonas europaea (strain ATCC 19718 / CIP 103999 / KCTC 2705 / NBRC 14298).